Consider the following 544-residue polypeptide: Chaperonin GroEL (544 aa).

Residues 29–32, 86–90, G413, 476–478, and D492 each bind ATP; these read TLGP, DGTTT, and NAA.

The protein belongs to the chaperonin (HSP60) family. Forms a cylinder of 14 subunits composed of two heptameric rings stacked back-to-back. Interacts with the co-chaperonin GroES.

Its subcellular location is the cytoplasm. The catalysed reaction is ATP + H2O + a folded polypeptide = ADP + phosphate + an unfolded polypeptide.. Functionally, together with its co-chaperonin GroES, plays an essential role in assisting protein folding. The GroEL-GroES system forms a nano-cage that allows encapsulation of the non-native substrate proteins and provides a physical environment optimized to promote and accelerate protein folding. This Bacillus velezensis (strain DSM 23117 / BGSC 10A6 / LMG 26770 / FZB42) (Bacillus amyloliquefaciens subsp. plantarum) protein is Chaperonin GroEL.